Reading from the N-terminus, the 284-residue chain is Pantothenate synthetase (284 aa).

32 to 39 (MGALHEGH) serves as a coordination point for ATP. His39 acts as the Proton donor in catalysis. Residue Gln63 participates in (R)-pantoate binding. Gln63 is a binding site for beta-alanine. Residue 149–152 (GEKD) coordinates ATP. Gln155 contacts (R)-pantoate. Residues Val178 and 186–189 (LSSR) each bind ATP.

The protein belongs to the pantothenate synthetase family. Homodimer.

It localises to the cytoplasm. The enzyme catalyses (R)-pantoate + beta-alanine + ATP = (R)-pantothenate + AMP + diphosphate + H(+). Its pathway is cofactor biosynthesis; (R)-pantothenate biosynthesis; (R)-pantothenate from (R)-pantoate and beta-alanine: step 1/1. Catalyzes the condensation of pantoate with beta-alanine in an ATP-dependent reaction via a pantoyl-adenylate intermediate. This Chelativorans sp. (strain BNC1) protein is Pantothenate synthetase.